The following is a 247-amino-acid chain: MSPNLTSSSDLFTQEQKEKLLNPINHSQVTQDLSENVILTTVDDLYNWARLSSLWPLLYGTACCFIEFAALIGSRFDFDRFGLVPRSSPRQADLIITAGTITMKMAPALVRLYEQMPDPKYVIAMGACTITGGMFSSDSTTAVRGVDKLIPVDVYIPGCPPRPEAIFDAIVKLRKKVANDSIQVRPEQNHRYYSTTHTMKATSPILTGQYLRAQTRQAPPLELSEAMGMPIPPALMTTEQKEEVDRG.

[4Fe-4S] cluster-binding residues include cysteine 63, cysteine 64, cysteine 128, and cysteine 159.

Belongs to the complex I 20 kDa subunit family. As to quaternary structure, NDH-1 can be composed of about 15 different subunits; different subcomplexes with different compositions have been identified which probably have different functions. [4Fe-4S] cluster is required as a cofactor.

The protein resides in the cellular thylakoid membrane. The catalysed reaction is a plastoquinone + NADH + (n+1) H(+)(in) = a plastoquinol + NAD(+) + n H(+)(out). It catalyses the reaction a plastoquinone + NADPH + (n+1) H(+)(in) = a plastoquinol + NADP(+) + n H(+)(out). NDH-1 shuttles electrons from an unknown electron donor, via FMN and iron-sulfur (Fe-S) centers, to quinones in the respiratory and/or the photosynthetic chain. The immediate electron acceptor for the enzyme in this species is believed to be plastoquinone. Couples the redox reaction to proton translocation, and thus conserves the redox energy in a proton gradient. Cyanobacterial NDH-1 also plays a role in inorganic carbon-concentration. The polypeptide is NAD(P)H-quinone oxidoreductase subunit K (Gloeothece citriformis (strain PCC 7424) (Cyanothece sp. (strain PCC 7424))).